The sequence spans 413 residues: 2,3-bisphosphoglycerate-independent phosphoglycerate mutase (413 aa).

It belongs to the BPG-independent phosphoglycerate mutase family. A-PGAM subfamily.

The enzyme catalyses (2R)-2-phosphoglycerate = (2R)-3-phosphoglycerate. It functions in the pathway carbohydrate degradation; glycolysis; pyruvate from D-glyceraldehyde 3-phosphate: step 3/5. Functionally, catalyzes the interconversion of 2-phosphoglycerate and 3-phosphoglycerate. The protein is 2,3-bisphosphoglycerate-independent phosphoglycerate mutase of Sulfurisphaera tokodaii (strain DSM 16993 / JCM 10545 / NBRC 100140 / 7) (Sulfolobus tokodaii).